The sequence spans 881 residues: Putative outer membrane usher protein YfcU (881 aa).

Positions 1 to 29 are cleaved as a signal peptide; that stretch reads MPDHSLFRLRILPWCIALAMSGSYSSVWA.

Belongs to the fimbrial export usher family.

It is found in the cell outer membrane. In terms of biological role, part of the yfcOPQRSUV fimbrial operon. Could contribute to adhesion to various surfaces in specific environmental niches. Increases adhesion to eukaryotic T24 bladder epithelial cells in the absence of fim genes. Probably involved in the export and assembly of fimbrial subunits across the outer membrane. The polypeptide is Putative outer membrane usher protein YfcU (yfcU) (Escherichia coli (strain K12)).